The following is a 78-amino-acid chain: Small ribosomal subunit protein bS20 (78 aa).

Belongs to the bacterial ribosomal protein bS20 family.

In terms of biological role, binds directly to 16S ribosomal RNA. This Streptococcus thermophilus (strain ATCC BAA-491 / LMD-9) protein is Small ribosomal subunit protein bS20.